The primary structure comprises 579 residues: ERV-BabFcenv provirus ancestral Env polyprotein (579 aa).

A signal peptide spans 1 to 22 (MISAVLNLPSTPLLPLLWFTLI). The interval 23–387 (IPASLTNPKF…LSSSNNIQKQ (365 aa)) is surface protein. Topologically, residues 23–523 (IPASLTNPKF…VWLLPVVQQM (501 aa)) are extracellular. Asn135, Asn203, Asn242, and Asn251 each carry an N-linked (GlcNAc...) asparagine glycan. Residues 255–258 (CFLC) carry the CXXC motif. 3 N-linked (GlcNAc...) asparagine glycosylation sites follow: Asn276, Asn312, and Asn337. Residues 388 to 408 (AVFLPLIIGVSLASSLVASGL) are fusion peptide. Positions 388-579 (AVFLPLIIGV…LPTSDPNYAP (192 aa)) are transmembrane protein. Positions 453–469 (AQNRRALDLLTAEKGGT) match the CKS-17 motif. Cys470 and Cys477 form a disulfide bridge. The CX6CC motif lies at 470-478 (CLFLGEECC). Asn482 is a glycosylation site (N-linked (GlcNAc...) asparagine). A helical transmembrane segment spans residues 524–544 (LPFLIPILILCLMLCLAPILI). The Cytoplasmic segment spans residues 545-579 (KFLRARVQEITRVTFNQMLLHPYTQLPTSDPNYAP).

Belongs to the gamma type-C retroviral envelope protein family. HERV class-I F(c)1 env subfamily. Post-translationally, specific enzymatic cleavages in vivo yield the mature SU and TM proteins. The CXXC motif is highly conserved across a broad range of retroviral envelope proteins. It is thought to participate in the formation of a labile disulfide bond possibly with the CX6CC motif present in the transmembrane domain.

Its subcellular location is the cell membrane. In terms of biological role, retroviral envelope proteins mediate receptor recognition and membrane fusion during early infection. Endogenous envelope proteins may have kept, lost or modified their original function during evolution. This chain is ERV-BabFcenv provirus ancestral Env polyprotein, found in Papio anubis (Olive baboon).